The chain runs to 267 residues: FCS-Like Zinc finger 8 (267 aa).

Disordered stretches follow at residues 1–29 and 124–156; these read MLKK…KTTP and DSPI…GSPR. 2 stretches are compositionally biased toward polar residues: residues 15–28 and 126–141; these read ETNQ…SKTT and PISS…NSQP. The segment at 221–265 adopts an FLZ-type zinc-finger fold; the sequence is SFLSCCCNCKKSLGPRDDIFMYRGDRAFCSSECRSIEMMMSEEND.

The protein belongs to the FLZ family. In terms of assembly, interacts with KIN10 and KIN11 via its FLZ-type zinc finger domain. Interacts with KINB1, KINB2, KINB3 and SNF4 via its N-terminal part. Interacts with HB21/ZHD3.

Functionally, may act as an adapter to facilitate the interaction of SnRK1 complex with effector proteins, conferring tissue- and stimulus-type specific differences in the SnRK1 regulation pathway. The sequence is that of FCS-Like Zinc finger 8 from Arabidopsis thaliana (Mouse-ear cress).